Here is a 1044-residue protein sequence, read N- to C-terminus: Ras GTPase-activating protein 1 (1044 aa).

Met1 is subject to N-acetylmethionine. Residues 1 to 160 (MMAAEAGGEE…DEGDSLDGPE (160 aa)) form a hydrophobic region. The SH2 1 domain maps to 178–269 (WYHGKLDRTI…LKGEKLLYPV (92 aa)). The SH3 domain occupies 276–338 (EDRRRVRAIL…VEDLVEEVGR (63 aa)). In terms of domain architecture, SH2 2 spans 348–438 (WFHGKISKQE…VEGYYLKEPV (91 aa)). A PH domain is found at 471-574 (NIVKKGYLLK…WMKGLQAFCN (104 aa)). The C2 domain occupies 574–687 (NLRKSSPGTS…QKGHATDEWF (114 aa)). Tyr612 is modified (phosphotyrosine). Repeats lie at residues 646–664 (PDINRFEITLSNKTKKSKD) and 665–683 (PDILFMRCQLSRLQKGHAT). A Ras-GAP domain is found at 761 to 971 (KLESLLLCTL…HRMIMFLDEL (211 aa)). Ser828 is modified (phosphoserine).

In terms of assembly, interacts with SQSTM1. Interacts with SPSB1; the interaction does not promote degradation. Interacts with CAV2 (tyrosine phosphorylated form). Directly interacts with NCK1. Interacts with PDGFRB (tyrosine phosphorylated). Interacts (via SH2 domain) with the 'Tyr-9' phosphorylated form of PDPK1. Interacts with tyrosine-phosphorylated EPHB4. Phosphorylated by SRC and LCK. The phosphorylation SRC inhibits its ability to stimulate the Ras-GTPase activity, whereas phosphorylation by LCK does not display any effect on stimulation activity.

The protein resides in the cytoplasm. In terms of biological role, inhibitory regulator of the Ras-cyclic AMP pathway. Stimulates the GTPase of normal but not oncogenic Ras p21. The polypeptide is Ras GTPase-activating protein 1 (RASA1) (Bos taurus (Bovine)).